The sequence spans 397 residues: Cytochrome b (397 aa).

Transmembrane regions (helical) follow at residues 38-58 (FGSL…FLAM), 82-104 (WLLR…LHIF), 119-139 (VWCL…IGYV), and 185-205 (FFSL…LHLA). Residues H88 and H102 each coordinate heme b. The heme b site is built by H189 and H203. H208 provides a ligand contact to a ubiquinone. 4 helical membrane passes run 231 to 251 (FYVK…IWIF), 295 to 315 (AGGV…PFFK), 327 to 347 (IYQG…WIGC), and 354 to 373 (FVTI…AITP).

It belongs to the cytochrome b family. In terms of assembly, the main subunits of complex b-c1 are: cytochrome b, cytochrome c1 and the Rieske protein. Heme b is required as a cofactor.

The protein localises to the mitochondrion inner membrane. Component of the ubiquinol-cytochrome c reductase complex (complex III or cytochrome b-c1 complex) that is part of the mitochondrial respiratory chain. The b-c1 complex mediates electron transfer from ubiquinol to cytochrome c. Contributes to the generation of a proton gradient across the mitochondrial membrane that is then used for ATP synthesis. This is Cytochrome b (MT-CYB) from Oryza sativa subsp. indica (Rice).